Reading from the N-terminus, the 23-residue chain is Magainin-B2 (23 aa).

Expressed by the skin glands.

It localises to the secreted. In terms of biological role, has antimicrobial activity against Gram-negative bacterium E.coli ATCC 25922 (MIC=50 uM) and against fungus C.albicans ATCC 90028 (MIC=100 uM). Has no hemolytic activity against human erythrocytes even at high concentrations. The polypeptide is Magainin-B2 (Xenopus borealis (Kenyan clawed frog)).